We begin with the raw amino-acid sequence, 760 residues long: RxLR effector protein PSR2 (760 aa).

An N-terminal signal peptide occupies residues 1-21 (MGCRYAVLALAVAYFAGSIAA). The RxLR-dEER signature appears at 47 to 62 (RFLRAANTADERNEDR). Residues 87–134 (PLLSWFEKKKSPDYVFLKLKINKGKQQLFDHPDWNVWVQYTTSVVKSD) form a WY1 repeat. The tract at residues 87 to 760 (PLLSWFEKKK…TTKYMERYGQ (674 aa)) is 7 X 93 AA tandem repeats. The LWY2 repeat unit spans residues 135–221 (PEEAMIAALR…MKLYNSKPVN (87 aa)). One copy of the LWY3 repeat lies at 222–312 (KKQQVTLVSM…KYVDNYNRDF (91 aa)). An LWY4 repeat occupies 313 to 403 (PDEATTVMAT…KYVEDLNLKP (91 aa)). The LWY5 repeat unit spans residues 404–496 (EHNDLQVSII…KFLEHYYKSF (93 aa)). The LWY6 repeat unit spans residues 497-584 (PTPMMSALAK…RYLDEFNKKF (88 aa)). Residues 585–760 (PDEKVSMTDT…TTKYMERYGQ (176 aa)) form an LWY7 repeat.

This sequence belongs to the RxLR effector family. In terms of assembly, interacts with host dsRNA-binding protein DRB4.

The protein localises to the secreted. It localises to the host cell. In terms of biological role, secreted effector that possesses RNA silencing suppression activity by inhibiting the biogenesis of small RNAs in the host plant to promote enhanced susceptibility of host to the pathogen during infection. Interferes with secondary siRNA production by associating with host dsRNA-binding protein DRB4. Inhibits the host salicylic acid pathway during infection. The protein is RxLR effector protein PSR2 of Phytophthora infestans (strain T30-4) (Potato late blight agent).